The sequence spans 298 residues: uncharacterized protein (298 aa).

The 58-residue stretch at 5–62 (TSLSAMRIFEAAARLGSFRAAAEELNLSPSAVSHAIMRLERDLGVALFERTTRSVSLT) folds into the HTH lysR-type domain. The H-T-H motif DNA-binding region spans 22-42 (FRAAAEELNLSPSAVSHAIMR).

Belongs to the LysR transcriptional regulatory family.

This is an uncharacterized protein from Sinorhizobium fredii (strain NBRC 101917 / NGR234).